A 474-amino-acid chain; its full sequence is Probable glycine dehydrogenase (decarboxylating) subunit 2 (474 aa).

An N6-(pyridoxal phosphate)lysine modification is found at K262.

This sequence belongs to the GcvP family. C-terminal subunit subfamily. The glycine cleavage system is composed of four proteins: P, T, L and H. In this organism, the P 'protein' is a heterodimer of two subunits. It depends on pyridoxal 5'-phosphate as a cofactor.

It carries out the reaction N(6)-[(R)-lipoyl]-L-lysyl-[glycine-cleavage complex H protein] + glycine + H(+) = N(6)-[(R)-S(8)-aminomethyldihydrolipoyl]-L-lysyl-[glycine-cleavage complex H protein] + CO2. Its function is as follows. The glycine cleavage system catalyzes the degradation of glycine. The P protein binds the alpha-amino group of glycine through its pyridoxal phosphate cofactor; CO(2) is released and the remaining methylamine moiety is then transferred to the lipoamide cofactor of the H protein. The polypeptide is Probable glycine dehydrogenase (decarboxylating) subunit 2 (Thermotoga petrophila (strain ATCC BAA-488 / DSM 13995 / JCM 10881 / RKU-1)).